We begin with the raw amino-acid sequence, 253 residues long: Ubiquinone biosynthesis O-methyltransferase (253 aa).

Arginine 41, glycine 72, aspartate 93, and leucine 136 together coordinate S-adenosyl-L-methionine.

It belongs to the methyltransferase superfamily. UbiG/COQ3 family.

The catalysed reaction is a 3-demethylubiquinol + S-adenosyl-L-methionine = a ubiquinol + S-adenosyl-L-homocysteine + H(+). It carries out the reaction a 3-(all-trans-polyprenyl)benzene-1,2-diol + S-adenosyl-L-methionine = a 2-methoxy-6-(all-trans-polyprenyl)phenol + S-adenosyl-L-homocysteine + H(+). It participates in cofactor biosynthesis; ubiquinone biosynthesis. Its function is as follows. O-methyltransferase that catalyzes the 2 O-methylation steps in the ubiquinone biosynthetic pathway. In Azorhizobium caulinodans (strain ATCC 43989 / DSM 5975 / JCM 20966 / LMG 6465 / NBRC 14845 / NCIMB 13405 / ORS 571), this protein is Ubiquinone biosynthesis O-methyltransferase.